The sequence spans 126 residues: Small ribosomal subunit protein bS16 (126 aa).

The interval alanine 87–glutamate 126 is disordered. Residues arginine 99–aspartate 113 show a composition bias toward basic and acidic residues. Residues alanine 114–glutamate 126 show a composition bias toward low complexity.

The protein belongs to the bacterial ribosomal protein bS16 family.

The protein is Small ribosomal subunit protein bS16 of Agrobacterium fabrum (strain C58 / ATCC 33970) (Agrobacterium tumefaciens (strain C58)).